A 200-amino-acid polypeptide reads, in one-letter code: Glycerol-3-phosphate acyltransferase (200 aa).

5 consecutive transmembrane segments (helical) span residues 4–24 (FALCYMFAAYLLGSISSAVIV), 53–73 (WAALAVFVFDVLKGMIPVWCG), 80–100 (QFELGMVALGACLGHIFPIFF), 115–135 (IAPIGWGVMATMLGTWVLVFV), and 138–158 (GYSSLSAVISALLVPLYVWWF).

This sequence belongs to the PlsY family. Probably interacts with PlsX.

It is found in the cell inner membrane. The catalysed reaction is an acyl phosphate + sn-glycerol 3-phosphate = a 1-acyl-sn-glycero-3-phosphate + phosphate. It functions in the pathway lipid metabolism; phospholipid metabolism. Catalyzes the transfer of an acyl group from acyl-phosphate (acyl-PO(4)) to glycerol-3-phosphate (G3P) to form lysophosphatidic acid (LPA). This enzyme utilizes acyl-phosphate as fatty acyl donor, but not acyl-CoA or acyl-ACP. This Actinobacillus succinogenes (strain ATCC 55618 / DSM 22257 / CCUG 43843 / 130Z) protein is Glycerol-3-phosphate acyltransferase.